A 905-amino-acid polypeptide reads, in one-letter code: Protein translocase subunit SecA (905 aa).

ATP-binding positions include Gln-86, 104–108 (GEGKT), and Asp-499. 4 residues coordinate Zn(2+): Cys-890, Cys-892, Cys-901, and His-902.

The protein belongs to the SecA family. In terms of assembly, monomer and homodimer. Part of the essential Sec protein translocation apparatus which comprises SecA, SecYEG and auxiliary proteins SecDF-YajC and YidC. Requires Zn(2+) as cofactor.

The protein localises to the cell inner membrane. Its subcellular location is the cytoplasm. It carries out the reaction ATP + H2O + cellular proteinSide 1 = ADP + phosphate + cellular proteinSide 2.. In terms of biological role, part of the Sec protein translocase complex. Interacts with the SecYEG preprotein conducting channel. Has a central role in coupling the hydrolysis of ATP to the transfer of proteins into and across the cell membrane, serving both as a receptor for the preprotein-SecB complex and as an ATP-driven molecular motor driving the stepwise translocation of polypeptide chains across the membrane. This chain is Protein translocase subunit SecA, found in Rickettsia typhi (strain ATCC VR-144 / Wilmington).